The following is a 378-amino-acid chain: Cell death-related nuclease 6 (378 aa).

The signal sequence occupies residues 1–17 (MIRQIILIVSLIGISNA). N-linked (GlcNAc...) asparagine glycans are attached at residues Asn-51, Asn-92, and Asn-111.

This sequence belongs to the DNase II family.

In terms of biological role, involved in apoptotic DNA degradation. This Caenorhabditis elegans protein is Cell death-related nuclease 6 (crn-6).